The chain runs to 142 residues: UPF0332 protein PH1297 (142 aa).

The protein belongs to the UPF0332 family.

The sequence is that of UPF0332 protein PH1297 from Pyrococcus horikoshii (strain ATCC 700860 / DSM 12428 / JCM 9974 / NBRC 100139 / OT-3).